Reading from the N-terminus, the 350-residue chain is Ceramide synthase 1 (350 aa).

Position 2 is an N-acetylalanine (Ala-2). Helical transmembrane passes span 53-73, 103-123, 148-168, 176-196, 239-259, and 287-307; these read AHLA…WTAL, AWKL…LLGT, IAVA…ATVY, SVVM…SYAF, VANL…LYWF, and LLLL…AFAA. One can recognise a TLC domain in the interval 97–311; the sequence is ARLPESAWKL…IVAFAAKVLT (215 aa).

Acetylated. Deacetylation by SIRT3 increases enzyme activity and promotes mitochondrial ceramide accumulation. Expressed in brain, skeletal muscle, heart and perigonadal white adipose tissue.

Its subcellular location is the endoplasmic reticulum membrane. The catalysed reaction is a sphingoid base + octadecanoyl-CoA = an N-octadecanoyl-sphingoid base + CoA + H(+). The enzyme catalyses sphinganine + octadecanoyl-CoA = N-(octadecanoyl)-sphinganine + CoA + H(+). It carries out the reaction hexadecasphinganine + octadecanoyl-CoA = N-octadecanoylhexadecasphinganine + CoA + H(+). It catalyses the reaction sphing-4-enine + octadecanoyl-CoA = N-octadecanoylsphing-4-enine + CoA + H(+). The catalysed reaction is heptadecasphing-4-enine + octadecanoyl-CoA = N-octadecanoyl-heptadecasphing-4-enine + CoA + H(+). The enzyme catalyses 2-hydroxyoctadecanoyl-CoA + sphinganine = N-(2-hydroxyoctadecanoyl)-sphinganine + CoA + H(+). It carries out the reaction eicosanoyl-CoA + sphinganine = N-eicosanoylsphinganine + CoA + H(+). Its pathway is lipid metabolism; sphingolipid metabolism. Inhibited by fumonisin B1. In terms of biological role, ceramide synthase that catalyzes the transfer of the acyl chain from acyl-CoA to a sphingoid base, with high selectivity toward stearoyl-CoA (octadecanoyl-CoA; C18:0-CoA). N-acylates sphinganine and sphingosine bases to form dihydroceramides and ceramides in de novo synthesis and salvage pathways, respectively. Plays a predominant role in skeletal muscle in regulating C18 ceramide and dihydroceramide levels with an impact on whole-body glucose metabolism and insulin sensitivity. Protects from diet-induced obesity by suppressing the uptake of glucose in multiple organs in a FGF21-dependent way. Generates C18 ceramides in the brain, playing a critical role in cerebellar development and Purkinje cell function. In response to cellular stress mediates mitophagy, a known defense mechanism against cell transformation and aging. Upon mitochondria fission, generates C18 ceramides that anchor lipidated MAP1LC3B/LC3B-II autophagolysosomes to outer mitochondrial membranes to eliminate damaged mitochondria. This chain is Ceramide synthase 1, found in Mus musculus (Mouse).